Consider the following 765-residue polypeptide: LPS-assembly protein LptD (765 aa).

The N-terminal stretch at 1–18 is a signal peptide; it reads MQIRYFLALSLLPQVVLA.

Belongs to the LptD family. As to quaternary structure, component of the lipopolysaccharide transport and assembly complex. Interacts with LptE and LptA.

It localises to the cell outer membrane. Together with LptE, is involved in the assembly of lipopolysaccharide (LPS) at the surface of the outer membrane. The polypeptide is LPS-assembly protein LptD (Shewanella sp. (strain ANA-3)).